A 275-amino-acid polypeptide reads, in one-letter code: Ceramide synthase (275 aa).

Residues 34–261 (ADAVIVSARL…ICRGACRLFR (228 aa)) form the TLC domain. The next 4 membrane-spanning stretches (helical) occupy residues 130 to 150 (FLMVLHHAAMVLVCFPLSVVW), 159 to 179 (LGCMLMAEVSTPFVCLGKILI), 194 to 214 (ALMLLSFLCCRVLLFPYLYWA), and 232 to 252 (AHVNLGAALLLAPQLYWFFLI).

Each isoform has a distinct expression pattern. Isoform 1 is highly expressed in brain. Isoform 2 is expressed at low levels, if any, in all analyzed tissues, with slightly higher levels in testis. Isoform 3 is expressed at very high levels in testis and, at lower levels, in white adipose tissue. In epididymal fat, isoform 3 is expressed at higher levels in obese mice compared with lean mice. By contrast, isoform 1 and 2 levels are significantly lower in obese mice compared with lean mice.

The protein localises to the golgi apparatus membrane. It is found in the endoplasmic reticulum membrane. The enzyme catalyses sphing-4-enine + octadecanoyl-CoA = N-octadecanoylsphing-4-enine + CoA + H(+). It carries out the reaction eicosanoyl-CoA + sphing-4-enine = N-eicosanoyl-sphing-4-enine + CoA + H(+). It catalyses the reaction sphing-4-enine + hexadecanoyl-CoA = N-hexadecanoylsphing-4-enine + CoA + H(+). Functionally, involved in ceramide synthesis. In vitro, isoform 3 stimulates the production of C16-, C18- and C20-ceramides, isoform 1 slightly increases the levels of C18- and C20-ceramides, while isoform 2 exhibits only minimal activity. May interfere with adipogenesis by stimulating ceramide synthesis. This is Ceramide synthase (Tlcd3b) from Mus musculus (Mouse).